Here is a 241-residue protein sequence, read N- to C-terminus: Small ribosomal subunit protein uS2 (241 aa).

This sequence belongs to the universal ribosomal protein uS2 family.

This Proteus mirabilis (strain HI4320) protein is Small ribosomal subunit protein uS2.